Here is a 271-residue protein sequence, read N- to C-terminus: Cyclase-like protein 3 (271 aa).

The signal sequence occupies residues 1-21; sequence MYHLLIIITTLSFSSINITFA.

Belongs to the Cyclase 1 superfamily.

Its subcellular location is the secreted. It is found in the extracellular space. It localises to the extracellular matrix. The polypeptide is Cyclase-like protein 3 (Arabidopsis thaliana (Mouse-ear cress)).